An 802-amino-acid polypeptide reads, in one-letter code: E3 ubiquitin-protein ligase RNF10 (802 aa).

Composition is skewed to low complexity over residues 1–31 (MPQS…SGSS), 78–90 (SNQS…QKSK), and 104–113 (SKPFSSSSNG). A disordered region spans residues 1–134 (MPQSSPSTAA…AEFSPAQFSG (134 aa)). Ser5 carries the post-translational modification Phosphoserine. Residue Ser110 is modified to Phosphoserine. A compositionally biased stretch (basic and acidic residues) spans 114 to 124 (GRRDEVAEAQR). At Ser128 the chain carries Phosphoserine. Residues 225 to 267 (CPICLYPPTAAKITRCGHIFCWACILHYLSLSERTWSKCPICY) form an RING-type zinc finger. Residues 645-654 (DSALGPTSTE) show a composition bias toward polar residues. 3 disordered regions span residues 645 to 664 (DSAL…LSPL), 716 to 753 (DGWP…VPSF), and 767 to 802 (KLDT…VHTK). Residues 716-728 (DGWPKAAPKKDDN) are compositionally biased toward basic and acidic residues. A compositionally biased stretch (polar residues) spans 793 to 802 (LFSTSVVHTK).

It belongs to the RNF10 family. In terms of assembly, interacts with MEOX2.

It is found in the cytoplasm. Its subcellular location is the nucleus. The enzyme catalyses S-ubiquitinyl-[E2 ubiquitin-conjugating enzyme]-L-cysteine + [acceptor protein]-L-lysine = [E2 ubiquitin-conjugating enzyme]-L-cysteine + N(6)-ubiquitinyl-[acceptor protein]-L-lysine.. It participates in protein modification; protein ubiquitination. Functionally, E3 ubiquitin-protein ligase that catalyzes monoubiquitination of 40S ribosomal proteins RPS2/us5 and RPS3/us3 in response to ribosome stalling. Part of a ribosome quality control that takes place when ribosomes have stalled during translation initiation (iRQC): RNF10 acts by mediating monoubiquitination of RPS2/us5 and RPS3/us3, promoting their degradation by the proteasome. Also promotes ubiquitination of 40S ribosomal proteins in response to ribosome stalling during translation elongation. The action of RNF10 in iRQC is counteracted by USP10. May also act as a transcriptional factor involved in the regulation of MAG (Myelin-associated glycoprotein) expression. Acts as a regulator of Schwann cell differentiation and myelination. The sequence is that of E3 ubiquitin-protein ligase RNF10 from Rattus norvegicus (Rat).